The sequence spans 67 residues: DNA-directed RNA polymerase subunit omega (67 aa).

It belongs to the RNA polymerase subunit omega family. As to quaternary structure, the RNAP catalytic core consists of 2 alpha, 1 beta, 1 beta' and 1 omega subunit. When a sigma factor is associated with the core the holoenzyme is formed, which can initiate transcription.

It carries out the reaction RNA(n) + a ribonucleoside 5'-triphosphate = RNA(n+1) + diphosphate. In terms of biological role, promotes RNA polymerase assembly. Latches the N- and C-terminal regions of the beta' subunit thereby facilitating its interaction with the beta and alpha subunits. The sequence is that of DNA-directed RNA polymerase subunit omega from Leptothrix cholodnii (strain ATCC 51168 / LMG 8142 / SP-6) (Leptothrix discophora (strain SP-6)).